We begin with the raw amino-acid sequence, 186 residues long: ATP synthase subunit delta, chloroplastic (186 aa).

Belongs to the ATPase delta chain family. In terms of assembly, F-type ATPases have 2 components, F(1) - the catalytic core - and F(0) - the membrane proton channel. F(1) has five subunits: alpha(3), beta(3), gamma(1), delta(1), epsilon(1). CF(0) has four main subunits: a(1), b(1), b'(1) and c(10-14). The alpha and beta chains form an alternating ring which encloses part of the gamma chain. F(1) is attached to F(0) by a central stalk formed by the gamma and epsilon chains, while a peripheral stalk is formed by the delta, b and b' chains.

The protein localises to the plastid. It is found in the chloroplast thylakoid membrane. Functionally, f(1)F(0) ATP synthase produces ATP from ADP in the presence of a proton or sodium gradient. F-type ATPases consist of two structural domains, F(1) containing the extramembraneous catalytic core and F(0) containing the membrane proton channel, linked together by a central stalk and a peripheral stalk. During catalysis, ATP synthesis in the catalytic domain of F(1) is coupled via a rotary mechanism of the central stalk subunits to proton translocation. This protein is part of the stalk that links CF(0) to CF(1). It either transmits conformational changes from CF(0) to CF(1) or is implicated in proton conduction. The protein is ATP synthase subunit delta, chloroplastic of Pyropia yezoensis (Susabi-nori).